The primary structure comprises 385 residues: Trans-enoyl reductase tasC (385 aa).

49-52 (VDTK) provides a ligand contact to NADP(+). 136–143 (NSWYTVAW) serves as a coordination point for substrate. Residues 196–199 (SSST), 219–222 (SARN), and 284–285 (LD) contribute to the NADP(+) site. Residue 305-309 (GPELM) coordinates substrate. 374–375 (VS) is an NADP(+) binding site.

This sequence belongs to the zinc-containing alcohol dehydrogenase family. As to quaternary structure, monomer.

The catalysed reaction is (2S,4S)-4-hydroxy-4-methylglutamate + 8 malonyl-CoA + 3 S-adenosyl-L-methionine + ATP + 8 NADPH + 11 H(+) = (2S)-3-[(2S)-3,5-dioxo-4-[(2E,4R,6R,8E,10E,12E)-4,6,12-trimethyltetradeca-2,8,10,12-tetraenoyl]pyrrolidin-2-yl]-2-hydroxy-2-methylpropanoate + AMP + 3 S-adenosyl-L-homocysteine + 8 CO2 + diphosphate + 8 NADP(+) + 8 CoA + 6 H2O. The enzyme catalyses (2S,4R)-4-hydroxy-4-methylglutamate + 8 malonyl-CoA + 3 S-adenosyl-L-methionine + ATP + 8 NADPH + 11 H(+) = (2R)-3-[(2S)-3,5-dioxo-4-[(2E,4R,6R,8E,10E,12E)-4,6,12-trimethyltetradeca-2,8,10,12-tetraenoyl]pyrrolidin-2-yl]-2-hydroxy-2-methylpropanoate + AMP + 3 S-adenosyl-L-homocysteine + 8 CO2 + diphosphate + 8 NADP(+) + 8 CoA + 6 H2O. The protein operates within secondary metabolite biosynthesis. Trans-enoyl reductase; part of the gene cluster that mediates the biosynthesis of the tetramic acids Sch210971 and Sch210972, potential anti-HIV fungal natural product that contain a decalin core. The PKS module of tasS together with the enoylreductase tasC catalyze the formation of the polyketide unit which is then conjugated to 4-hydroxyl-4-methyl glutamate (HMG) by the condensation domain of the tasS NRPS module. One unique structural feature of Sch210971 and Sch210972 is the tetramic acid motif proposed to be derived from the non-proteinogenic amino acid HMG, by a Dieckmann-type condensation catalyzed by the reductase domain of tasS. The aldolase tasA catalyzes the aldol condensation of 2 molecules of pyruvic acid to yield the intermediate 4-hydroxyl-4-methyl-2-oxoglutarate (HMOG), which can then be stereoselectively transaminated, may be by tasG, to form HMG. The Diels-Alderase tas3 then uses the Dieckmann product of tasS as substrate and catalyzes the Diels-Alder cycloaddition to form the decalin ring of Sch210971 and Sch210972. This is Trans-enoyl reductase tasC from Hapsidospora irregularis.